The chain runs to 295 residues: Probable alpha-L-glutamate ligase 1 (295 aa).

One can recognise an ATP-grasp domain in the interval 104–287 (MQLLSRKGIG…VANAIIEFIE (184 aa)). Residues Lys141, 178-179 (EY), Asp187, and 211-213 (RSN) contribute to the ATP site. Positions 248, 260, and 262 each coordinate Mg(2+). Mn(2+)-binding residues include Asp248, Glu260, and Asn262.

The protein belongs to the RimK family. The cofactor is Mg(2+). Mn(2+) serves as cofactor.

This chain is Probable alpha-L-glutamate ligase 1, found in Shewanella denitrificans (strain OS217 / ATCC BAA-1090 / DSM 15013).